The primary structure comprises 188 residues: Elongation factor P (188 aa).

The protein belongs to the elongation factor P family.

It localises to the cytoplasm. It functions in the pathway protein biosynthesis; polypeptide chain elongation. In terms of biological role, involved in peptide bond synthesis. Stimulates efficient translation and peptide-bond synthesis on native or reconstituted 70S ribosomes in vitro. Probably functions indirectly by altering the affinity of the ribosome for aminoacyl-tRNA, thus increasing their reactivity as acceptors for peptidyl transferase. This chain is Elongation factor P, found in Bdellovibrio bacteriovorus (strain ATCC 15356 / DSM 50701 / NCIMB 9529 / HD100).